Here is a 754-residue protein sequence, read N- to C-terminus: Phosphoribosylformylglycinamidine synthase subunit PurL (754 aa).

A disordered region spans residues 1–21 (MLDTVEHAATTPDQPQPYGEL). The active site involves H54. ATP is bound by residues Y57 and K101. E103 is a binding site for Mg(2+). Substrate contacts are provided by residues 104-107 (SHNH) and R126. H105 acts as the Proton acceptor in catalysis. Residue D127 coordinates Mg(2+). Residue Q252 coordinates substrate. Residue D280 coordinates Mg(2+). 324–326 (ESQ) lines the substrate pocket. Positions 512 and 549 each coordinate ATP. N550 is a Mg(2+) binding site. S552 is a substrate binding site.

It belongs to the FGAMS family. As to quaternary structure, monomer. Part of the FGAM synthase complex composed of 1 PurL, 1 PurQ and 2 PurS subunits.

The protein resides in the cytoplasm. The catalysed reaction is N(2)-formyl-N(1)-(5-phospho-beta-D-ribosyl)glycinamide + L-glutamine + ATP + H2O = 2-formamido-N(1)-(5-O-phospho-beta-D-ribosyl)acetamidine + L-glutamate + ADP + phosphate + H(+). It functions in the pathway purine metabolism; IMP biosynthesis via de novo pathway; 5-amino-1-(5-phospho-D-ribosyl)imidazole from N(2)-formyl-N(1)-(5-phospho-D-ribosyl)glycinamide: step 1/2. Part of the phosphoribosylformylglycinamidine synthase complex involved in the purines biosynthetic pathway. Catalyzes the ATP-dependent conversion of formylglycinamide ribonucleotide (FGAR) and glutamine to yield formylglycinamidine ribonucleotide (FGAM) and glutamate. The FGAM synthase complex is composed of three subunits. PurQ produces an ammonia molecule by converting glutamine to glutamate. PurL transfers the ammonia molecule to FGAR to form FGAM in an ATP-dependent manner. PurS interacts with PurQ and PurL and is thought to assist in the transfer of the ammonia molecule from PurQ to PurL. This chain is Phosphoribosylformylglycinamidine synthase subunit PurL, found in Mycobacterium bovis (strain ATCC BAA-935 / AF2122/97).